Here is a 936-residue protein sequence, read N- to C-terminus: General transcription factor II-I repeat domain-containing protein 2 (936 aa).

Residues 95 to 189 (EACPGEAQLL…FLGAESQLGG (95 aa)) form a GTF2I-like 1 repeat. The disordered stretch occupies residues 199–222 (PTVPPNDSYGPVSVKTEPMEDSGT). One copy of the GTF2I-like 2 repeat lies at 319–413 (LSGLEKIKQL…LPGLELSNVG (95 aa)).

It belongs to the TFII-I family. Ubiquitous.

The protein resides in the nucleus. The sequence is that of General transcription factor II-I repeat domain-containing protein 2 (Gtf2ird2) from Mus musculus (Mouse).